The chain runs to 773 residues: Preaspterpenacid I synthase sttA (773 aa).

Positions 4-359 (ISDVMKHCVP…RYHRTDLATT (356 aa)) are sesterterpenoid synthase. Residue Asp-105 participates in Mg(2+) binding. Asp-105 contacts substrate. The tract at residues 211-214 (RVNE) is substrate. Residue Asn-255 participates in substrate binding. Substrate stretches follow at residues 259-263 (SFPKE) and 350-351 (RY). The segment at 360–769 (AEDRATLIGK…RMMLLGMGPK (410 aa)) is geranylfarnesyl diphosphate synthase. Residues 423–447 (AFKKRNSRNGKQNGTEGSKSTFTNG) are disordered. Polar residues predominate over residues 431–447 (NGKQNGTEGSKSTFTNG). Positions 493, 496, and 525 each coordinate isopentenyl diphosphate. Mg(2+)-binding residues include Asp-532 and Asp-536. A dimethylallyl diphosphate-binding site is contributed by Arg-541. Arg-542 lines the isopentenyl diphosphate pocket. Dimethylallyl diphosphate contacts are provided by Lys-614, Thr-615, Gln-652, Asn-659, and Lys-669.

It in the N-terminal section; belongs to the terpene synthase family. The protein in the C-terminal section; belongs to the FPP/GGPP synthase family.

It catalyses the reaction 4 isopentenyl diphosphate + dimethylallyl diphosphate = (2E,6E,10E,14E)-geranylfarnesyl diphosphate + 4 diphosphate. It carries out the reaction (2E,6E,10E,14E)-geranylfarnesyl diphosphate + H2O = preaspterpenacid acid I + diphosphate. The protein operates within secondary metabolite biosynthesis; terpenoid biosynthesis. In terms of biological role, sesterterpenoid synthase; part of the gene cluster that mediates the biosynthesis of aspterpenacids. Performs both prenyl transferase and terpene cyclase activity, converting isopentenyl diphosphate and dimethylallyl diphosphate into geranylfarnesyl diphosphate (GFPP) and then converting GFPP into preaspterpenacid I. C22-oxidative modification of preaspterpenacid I by the cytochrome P450 monooxygenase sttB then leads to preaspterpenacid II. It has still to be determined how preaspterpenacid II is further modified to produce aspterpenacids. This Aspergillus terreus (strain NIH 2624 / FGSC A1156) protein is Preaspterpenacid I synthase sttA.